A 364-amino-acid chain; its full sequence is Aminomethyltransferase (364 aa).

This sequence belongs to the GcvT family. As to quaternary structure, the glycine cleavage system is composed of four proteins: P, T, L and H.

The catalysed reaction is N(6)-[(R)-S(8)-aminomethyldihydrolipoyl]-L-lysyl-[protein] + (6S)-5,6,7,8-tetrahydrofolate = N(6)-[(R)-dihydrolipoyl]-L-lysyl-[protein] + (6R)-5,10-methylene-5,6,7,8-tetrahydrofolate + NH4(+). Its function is as follows. The glycine cleavage system catalyzes the degradation of glycine. The protein is Aminomethyltransferase of Citrobacter koseri (strain ATCC BAA-895 / CDC 4225-83 / SGSC4696).